The chain runs to 174 residues: RNA pyrophosphohydrolase (174 aa).

One can recognise a Nudix hydrolase domain in the interval 6 to 145 (GYRPNVGMII…KRRVYWQALQ (140 aa)). Residues 38 to 59 (GGIDYAETPEQAMFRELEEEVG) carry the Nudix box motif.

The protein belongs to the Nudix hydrolase family. RppH subfamily. A divalent metal cation serves as cofactor.

In terms of biological role, accelerates the degradation of transcripts by removing pyrophosphate from the 5'-end of triphosphorylated RNA, leading to a more labile monophosphorylated state that can stimulate subsequent ribonuclease cleavage. The chain is RNA pyrophosphohydrolase from Acidithiobacillus ferrooxidans (strain ATCC 53993 / BNL-5-31) (Leptospirillum ferrooxidans (ATCC 53993)).